The following is a 553-amino-acid chain: Urocanate hydratase (553 aa).

Residues 45 to 46 (GG), Gln123, 169 to 171 (GMG), Asp189, Arg194, 235 to 236 (NA), 256 to 260 (QTSAH), 266 to 267 (YV), Tyr315, and Gly485 each bind NAD(+).

Belongs to the urocanase family. NAD(+) serves as cofactor.

It is found in the cytoplasm. The enzyme catalyses 4-imidazolone-5-propanoate = trans-urocanate + H2O. Its pathway is amino-acid degradation; L-histidine degradation into L-glutamate; N-formimidoyl-L-glutamate from L-histidine: step 2/3. In terms of biological role, catalyzes the conversion of urocanate to 4-imidazolone-5-propionate. This Staphylococcus aureus (strain Mu50 / ATCC 700699) protein is Urocanate hydratase.